Here is a 535-residue protein sequence, read N- to C-terminus: Bifunctional purine biosynthesis protein PurH (535 aa).

The MGS-like domain occupies 6 to 151; sequence TRLPIRRALI…KNHKDVAIVV (146 aa).

It belongs to the PurH family.

The enzyme catalyses (6R)-10-formyltetrahydrofolate + 5-amino-1-(5-phospho-beta-D-ribosyl)imidazole-4-carboxamide = 5-formamido-1-(5-phospho-D-ribosyl)imidazole-4-carboxamide + (6S)-5,6,7,8-tetrahydrofolate. It catalyses the reaction IMP + H2O = 5-formamido-1-(5-phospho-D-ribosyl)imidazole-4-carboxamide. It functions in the pathway purine metabolism; IMP biosynthesis via de novo pathway; 5-formamido-1-(5-phospho-D-ribosyl)imidazole-4-carboxamide from 5-amino-1-(5-phospho-D-ribosyl)imidazole-4-carboxamide (10-formyl THF route): step 1/1. The protein operates within purine metabolism; IMP biosynthesis via de novo pathway; IMP from 5-formamido-1-(5-phospho-D-ribosyl)imidazole-4-carboxamide: step 1/1. The sequence is that of Bifunctional purine biosynthesis protein PurH from Pseudomonas entomophila (strain L48).